A 340-amino-acid chain; its full sequence is Heat-inducible transcription repressor HrcA (340 aa).

This sequence belongs to the HrcA family.

Negative regulator of class I heat shock genes (grpE-dnaK-dnaJ and groELS operons). Prevents heat-shock induction of these operons. The sequence is that of Heat-inducible transcription repressor HrcA from Mycoplasma mycoides subsp. mycoides SC (strain CCUG 32753 / NCTC 10114 / PG1).